Consider the following 377-residue polypeptide: Nitric oxide reductase FlRd-NAD(+) reductase (377 aa).

The protein belongs to the FAD-dependent oxidoreductase family. Requires FAD as cofactor.

It is found in the cytoplasm. It catalyses the reaction 2 reduced [nitric oxide reductase rubredoxin domain] + NAD(+) + H(+) = 2 oxidized [nitric oxide reductase rubredoxin domain] + NADH. Its pathway is nitrogen metabolism; nitric oxide reduction. One of at least two accessory proteins for anaerobic nitric oxide (NO) reductase. Reduces the rubredoxin moiety of NO reductase. The polypeptide is Nitric oxide reductase FlRd-NAD(+) reductase (Shigella boydii serotype 18 (strain CDC 3083-94 / BS512)).